An 891-amino-acid chain; its full sequence is 26S proteasome non-ATPase regulatory subunit 2 homolog B (891 aa).

The disordered stretch occupies residues 1–43 (MAPVPDPNSVGGGAKRDEATTKIPSKDSKKKDDKKEEDLSEED). Positions 14 to 37 (AKRDEATTKIPSKDSKKKDDKKEE) are enriched in basic and acidic residues. 7 PC repeats span residues 414-447 (SAVA…PVVA), 448-484 (GALL…SVRI), 485-519 (GAIM…PLDV), 522-556 (FAAL…AELG), 565-594 (LGLG…KIRK), 674-705 (LALG…EVAM), and 724-739 (AGML…KDAS).

Belongs to the proteasome subunit S2 family. Component of the 19S regulatory particle (RP/PA700) base subcomplex of the 26S proteasome. The 26S proteasome is composed of a core protease (CP), known as the 20S proteasome, capped at one or both ends by the 19S regulatory particle (RP/PA700). The RP/PA700 complex is composed of at least 17 different subunits in two subcomplexes, the base and the lid, which form the portions proximal and distal to the 20S proteolytic core, respectively. Ubiquitinated. Expressed in stems, leaves, buds, flowers, siliques and developing seeds.

In terms of biological role, acts as a regulatory subunit of the 26 proteasome which is involved in the ATP-dependent degradation of ubiquitinated proteins. In Arabidopsis thaliana (Mouse-ear cress), this protein is 26S proteasome non-ATPase regulatory subunit 2 homolog B (RPN1B).